The following is a 316-amino-acid chain: Methionyl-tRNA formyltransferase (316 aa).

A (6S)-5,6,7,8-tetrahydrofolate-binding site is contributed by 109–112 (SLLP).

Belongs to the Fmt family.

It carries out the reaction L-methionyl-tRNA(fMet) + (6R)-10-formyltetrahydrofolate = N-formyl-L-methionyl-tRNA(fMet) + (6S)-5,6,7,8-tetrahydrofolate + H(+). Functionally, attaches a formyl group to the free amino group of methionyl-tRNA(fMet). The formyl group appears to play a dual role in the initiator identity of N-formylmethionyl-tRNA by promoting its recognition by IF2 and preventing the misappropriation of this tRNA by the elongation apparatus. This is Methionyl-tRNA formyltransferase from Nitrosomonas eutropha (strain DSM 101675 / C91 / Nm57).